The primary structure comprises 547 residues: MAAKDIVYREDARTAMERGVNALADAVRVTLGPKGRNVVLEKKFGSPMIVNDGVTIAREIELENPFENMGAQLVKEVATKTNDIAGDGTTTAAVLAQAIVRAGLKNVTAGANPMILKRGIEKAVERTVEEIKSRAKPVESKEAITQVASISANDTTIGNLIADAMEKVGKDGVITVEESKGMGTSLEVVDGMNFDRGYISPYMITDPDKMEATLADPYILITDKKISAVADILPILEKVLQAGKALLIIAEDVEGEALATLVVNKLRGTLNVVAVKAPGFGDRRKAMLEDIAILTGGRVVSEEVGLKLDKAGLDLLGKARQVRVKKDETIVVDGQGDADAITKRLAQIKKQIEDTTSDFDREKLQERLAKLAGGVAVINVGAATETEMKEKKLRIEDALNATRAAVEEGIVPGGGTVYVNVIPVLNGLEPELPDERTGVDIIKRALEAPLRQIANNAGVEGSIVVEKVKESPAGVGFDALSEQYTDMIGAGIVDPAKVTRIALQNAASIAAMILTTETLVAEKVDKDKKGGMGGMGGMGGMGGMDMM.

ATP contacts are provided by residues T30–P33, D87–T91, G414, D478–L480, and D494.

It belongs to the chaperonin (HSP60) family. In terms of assembly, forms a cylinder of 14 subunits composed of two heptameric rings stacked back-to-back. Interacts with the co-chaperonin GroES.

It is found in the cytoplasm. The enzyme catalyses ATP + H2O + a folded polypeptide = ADP + phosphate + an unfolded polypeptide.. Functionally, together with its co-chaperonin GroES, plays an essential role in assisting protein folding. The GroEL-GroES system forms a nano-cage that allows encapsulation of the non-native substrate proteins and provides a physical environment optimized to promote and accelerate protein folding. The chain is Chaperonin GroEL from Desulforudis audaxviator (strain MP104C).